Reading from the N-terminus, the 593-residue chain is Copine-5 (593 aa).

Residues 2-134 form the C2 1 domain; the sequence is EQPEDMASLS…SSGSRLEKPL (133 aa). Residue serine 19 is modified to Phosphoserine. Positions 38, 44, 98, 100, 103, 108, and 110 each coordinate Ca(2+). Residue serine 103 is modified to Phosphoserine. The residue at position 140 (serine 140) is a Phosphoserine. The C2 2 domain maps to 161 to 284; the sequence is KCGTIILSAE…ARGQSQFNIY (124 aa). 5 residues coordinate Ca(2+): aspartate 192, aspartate 198, aspartate 254, aspartate 256, and aspartate 262. Positions 328–554 constitute a VWFA domain; it reads NFTVAIDFTA…DVLAEIPDQL (227 aa). The segment at 562 to 593 is disordered; the sequence is GIRPRPPPAAPAQSPPQSPAHSPPGSPVHTHI. Positions 565 to 587 are enriched in pro residues; sequence PRPPPAAPAQSPPQSPAHSPPGS.

Belongs to the copine family. It depends on Ca(2+) as a cofactor. As to expression, expressed in the cerebra and cerebellum of newborn brain. Expressed in the eye, lung and muscles but weakly expressed in the adult brain (at protein level).

It is found in the perikaryon. The protein localises to the cell projection. Probable calcium-dependent phospholipid-binding protein that may play a role in calcium-mediated intracellular processes. Plays a role in dendrite formation by melanocytes. The sequence is that of Copine-5 from Mus musculus (Mouse).